We begin with the raw amino-acid sequence, 494 residues long: MANYFNTLNLREQLDQLGRCRFMAREEFATEADYLKGKKVVIVGCGAQGLNQGLNMRDSGLDVSYALRQAAIDEQRQSFKNAKNNGFNVGSYEQLIPTADLVINLTPDKQHTSVVNAVMPLMKQGAALGYSHGFNIVEEGMQIRKDITVVMVAPKCPGTEVREEYKRGFGVPTLIAVHPENDPQGEGWEIAKAWAAATGGHRAGCLASSFVAEVKSDLMGEQTILCGMLQAGSIVCYEKMVADGIDPGYAGKLLQFGWETITEALKFGGITHMMDRLSNPAKIKAFELSEELKDLMRPLYNKHMDDIISGHFSSTMMADWANDDKDLFGWRAETAETAFENYPTTDVKIAEQEYFDNGILMIAMVRAGVELAFEAMTASGIIDESAYYESLHELPLIANTVARKRLYEMNVVISDTAEYGNYLFANVAVPLLREKFMPKVGTDVIGKGLGVVSNQVDNATLIEVNSIIRNHPVEYIGEELRGYMKDMKRIAVGD.

In terms of domain architecture, KARI N-terminal Rossmann spans 14–208 (LDQLGRCRFM…GGHRAGCLAS (195 aa)). Residues 45–48 (CGAQ), Arg68, Arg76, Ser78, and 108–110 (DKQ) each bind NADP(+). His132 is a catalytic residue. Residue Gly158 coordinates NADP(+). KARI C-terminal knotted domains are found at residues 209 to 344 (SFVA…NYPT) and 345 to 487 (TDVK…MKDM). Mg(2+) contacts are provided by Asp217, Glu221, Glu389, and Glu393. Ser414 is a binding site for substrate.

It belongs to the ketol-acid reductoisomerase family. Requires Mg(2+) as cofactor.

The catalysed reaction is (2R)-2,3-dihydroxy-3-methylbutanoate + NADP(+) = (2S)-2-acetolactate + NADPH + H(+). It carries out the reaction (2R,3R)-2,3-dihydroxy-3-methylpentanoate + NADP(+) = (S)-2-ethyl-2-hydroxy-3-oxobutanoate + NADPH + H(+). It participates in amino-acid biosynthesis; L-isoleucine biosynthesis; L-isoleucine from 2-oxobutanoate: step 2/4. Its pathway is amino-acid biosynthesis; L-valine biosynthesis; L-valine from pyruvate: step 2/4. Involved in the biosynthesis of branched-chain amino acids (BCAA). Catalyzes an alkyl-migration followed by a ketol-acid reduction of (S)-2-acetolactate (S2AL) to yield (R)-2,3-dihydroxy-isovalerate. In the isomerase reaction, S2AL is rearranged via a Mg-dependent methyl migration to produce 3-hydroxy-3-methyl-2-ketobutyrate (HMKB). In the reductase reaction, this 2-ketoacid undergoes a metal-dependent reduction by NADPH to yield (R)-2,3-dihydroxy-isovalerate. The protein is Ketol-acid reductoisomerase (NADP(+)) of Vibrio cholerae serotype O1 (strain ATCC 39541 / Classical Ogawa 395 / O395).